Reading from the N-terminus, the 529-residue chain is Fibroblast growth factor receptor-like 1 (529 aa).

The first 20 residues, 1 to 20 (MTRSPALLLLLLGALPSAEA), serve as a signal peptide directing secretion. Residues 21–374 (ARGPPRMADK…SSSSTSLPWP (354 aa)) are Extracellular-facing. Ig-like C2-type domains lie at 25 to 111 (PRMA…YTLI), 143 to 233 (PRFT…YKVD), and 242 to 350 (PVLT…AFLT). C47 and C95 are disulfide-bonded. N107 is a glycosylation site (N-linked (GlcNAc...) asparagine). Residues 116–151 (ISPGKESPGPGGSSGGQEDPASQQWARPRFTQPSKM) form a disordered region. C168 and C217 are joined by a disulfide. N-linked (GlcNAc...) asparagine glycans are attached at residues N227, N251, and N289. The cysteines at positions 264 and 334 are disulfide-linked. The chain crosses the membrane as a helical span at residues 375 to 395 (VVIGIPAGAVFILGTVLLWLC). At 396–529 (QTKKKPCAPA…RIENNGGRVS (134 aa)) the chain is on the cytoplasmic side. The tract at residues 405-427 (ASTLPVPGHRPPGTSRERSGDKD) is disordered.

In terms of assembly, interacts with FGF2 with a low affinity. Highly expressed in the kidney, brain and lung. Weakly expressed in the muscle, thymus, lymph node, stomach, intestine, colon and liver. Expressed in fetal cartilaginous structures like the nasal cartilage, the ribs and the sternum as well as in the cartilaginous rudiments of developing bones such as the vertebrae and the pelvic bone. High expression is found in the muscles of the tongue and the diaphragm.

It is found in the cell membrane. In terms of biological role, has a negative effect on cell proliferation. The sequence is that of Fibroblast growth factor receptor-like 1 (Fgfrl1) from Mus musculus (Mouse).